The primary structure comprises 207 residues: Anthranilate synthase component II (207 aa).

One can recognise a Glutamine amidotransferase type-1 domain in the interval 17 to 207 (RVLFVDNFDS…DVIRNFLAGL (191 aa)). 66–68 (GPG) is an L-glutamine binding site. The active-site Nucleophile; for GATase activity is cysteine 96. 146 to 147 (SL) is a binding site for L-glutamine. Residues histidine 187 and glutamate 189 contribute to the active site.

As to quaternary structure, tetramer of two components I and two components II.

The catalysed reaction is chorismate + L-glutamine = anthranilate + pyruvate + L-glutamate + H(+). It functions in the pathway amino-acid biosynthesis; L-tryptophan biosynthesis; L-tryptophan from chorismate: step 1/5. The polypeptide is Anthranilate synthase component II (trpG1) (Haloarcula marismortui (strain ATCC 43049 / DSM 3752 / JCM 8966 / VKM B-1809) (Halobacterium marismortui)).